The primary structure comprises 410 residues: Serine/threonine transporter SstT (410 aa).

9 helical membrane-spanning segments follow: residues 11 to 31, 45 to 65, 79 to 99, 138 to 158, 179 to 199, 214 to 234, 285 to 305, 327 to 347, and 353 to 373; these read VSLV…AVTV, FVGA…ISAI, ILIL…VASF, ALLN…GIAL, IVTW…FDAI, LAVL…LIVF, ISIP…ISVL, VLSA…LLLI, and LFGI…IIGV.

The protein belongs to the dicarboxylate/amino acid:cation symporter (DAACS) (TC 2.A.23) family.

It is found in the cell membrane. It catalyses the reaction L-serine(in) + Na(+)(in) = L-serine(out) + Na(+)(out). The enzyme catalyses L-threonine(in) + Na(+)(in) = L-threonine(out) + Na(+)(out). In terms of biological role, involved in the import of serine and threonine into the cell, with the concomitant import of sodium (symport system). In Geobacillus thermodenitrificans (strain NG80-2), this protein is Serine/threonine transporter SstT.